The chain runs to 1101 residues: Selenocysteine insertion sequence-binding protein 2-like (1101 aa).

5 disordered regions span residues 154-206 (LGQV…AGPD), 240-295 (LWKS…PDSG), 320-387 (QKKP…SESL), 884-1010 (TSDG…ISVE), and 1030-1101 (TLQL…TQTT). The segment covering 255–265 (AESSSEQGASE) has biased composition (low complexity). Ser-276 bears the Phosphoserine mark. Over residues 327–346 (KNQTFSRGGRQTEQRNNSQV) the composition is skewed to polar residues. 2 stretches are compositionally biased toward basic and acidic residues: residues 356 to 371 (SSERRQNLQKRPDNKH) and 892 to 908 (ENEKEVSCKHSTSEKPS). Low complexity predominate over residues 925-939 (ATGSTTSATSAGKST). A compositionally biased stretch (basic and acidic residues) spans 940 to 950 (ASDKEEVKPDD). Residues 954-964 (ASQQSTETGSL) show a composition bias toward polar residues. Acidic residues predominate over residues 988-1002 (LEEEEDEDEEEEEDY). The span at 1030–1039 (TLQLGKTLNG) shows a compositional bias: polar residues. A compositionally biased stretch (acidic residues) spans 1040–1057 (SEEDNVEQSGEEEAEAPE). The span at 1070 to 1087 (ADQQASPGQQKSSNCSSL) shows a compositional bias: polar residues.

Functionally, binds SECIS (Sec insertion sequence) elements present on selenocysteine (Sec) protein mRNAs, but does not promote Sec incorporation into selenoproteins in vitro. The polypeptide is Selenocysteine insertion sequence-binding protein 2-like (SECISBP2L) (Homo sapiens (Human)).